The following is a 204-amino-acid chain: Dof zinc finger protein DOF3.1 (204 aa).

Residues 1–25 (MQDPAAYYQTMMAKQQQQQQPQFAE) form a disordered region. The Dof-type zinc-finger motif lies at 29 to 83 (LKCPRCDSPNTKFCYYNNYNLSQPRHFCKSCRRYWTKGGALRNVPVGGGSRKNAT). The Zn(2+) site is built by C31, C34, C56, and C59. Disordered regions lie at residues 70-128 (RNVP…TRML) and 182-204 (RTEP…AEKN). The span at 84 to 102 (KRSTSSSSSASSPSNSSQN) shows a compositional bias: low complexity. Residues 106–124 (KNPDPDPDPRNSQKPDLDP) are compositionally biased toward basic and acidic residues.

It is found in the nucleus. In terms of biological role, transcription factor that binds specifically to a 5'-AA[AG]G-3' consensus core sequence. The sequence is that of Dof zinc finger protein DOF3.1 (DOF3.1) from Arabidopsis thaliana (Mouse-ear cress).